The primary structure comprises 319 residues: Acetyl-coenzyme A carboxylase carboxyl transferase subunit alpha (319 aa).

Residues 31 to 292 (EIDSAIRSLR…KTYLSRQLSE (262 aa)) enclose the CoA carboxyltransferase C-terminal domain.

The protein belongs to the AccA family. In terms of assembly, acetyl-CoA carboxylase is a heterohexamer composed of biotin carboxyl carrier protein (AccB), biotin carboxylase (AccC) and two subunits each of ACCase subunit alpha (AccA) and ACCase subunit beta (AccD).

Its subcellular location is the cytoplasm. The catalysed reaction is N(6)-carboxybiotinyl-L-lysyl-[protein] + acetyl-CoA = N(6)-biotinyl-L-lysyl-[protein] + malonyl-CoA. It participates in lipid metabolism; malonyl-CoA biosynthesis; malonyl-CoA from acetyl-CoA: step 1/1. Component of the acetyl coenzyme A carboxylase (ACC) complex. First, biotin carboxylase catalyzes the carboxylation of biotin on its carrier protein (BCCP) and then the CO(2) group is transferred by the carboxyltransferase to acetyl-CoA to form malonyl-CoA. This Rhodopirellula baltica (strain DSM 10527 / NCIMB 13988 / SH1) protein is Acetyl-coenzyme A carboxylase carboxyl transferase subunit alpha.